The primary structure comprises 485 residues: GTPase Obg (485 aa).

An Obg domain is found at 2–159 (SKFIDRVVLH…RDLVLELKSV (158 aa)). Residues 64–84 (PHAKAGNGKPGEGGNRDGKMG) form a disordered region. The OBG-type G domain maps to 160–340 (ADVGLVGFPS…LTFALADLVR (181 aa)). Residues 166–173 (GFPSAGKS), 191–195 (FTTLV), 212–215 (DVPG), 292–295 (NKTD), and 321–323 (SAV) contribute to the GTP site. Residues Ser-173 and Thr-193 each coordinate Mg(2+). The 81-residue stretch at 358–438 (PIAVDESGFT…IGDVTFDWEP (81 aa)) folds into the OCT domain. The span at 457 to 469 (LEQSDRVSAAERK) shows a compositional bias: basic and acidic residues. Positions 457-485 (LEQSDRVSAAERKHASRVRRGLVEDDEQR) are disordered.

It belongs to the TRAFAC class OBG-HflX-like GTPase superfamily. OBG GTPase family. As to quaternary structure, monomer. Requires Mg(2+) as cofactor.

The protein localises to the cytoplasm. Its function is as follows. An essential GTPase which binds GTP, GDP and possibly (p)ppGpp with moderate affinity, with high nucleotide exchange rates and a fairly low GTP hydrolysis rate. Plays a role in control of the cell cycle, stress response, ribosome biogenesis and in those bacteria that undergo differentiation, in morphogenesis control. This is GTPase Obg from Nocardia farcinica (strain IFM 10152).